The primary structure comprises 81 residues: uncharacterized protein (81 aa).

Helical transmembrane passes span 27-47 (ASLL…LNLT) and 54-74 (IFGA…IFIM).

It localises to the cell membrane. This is an uncharacterized protein from Bacillus subtilis (strain 168).